A 247-amino-acid chain; its full sequence is Cationic trypsin-3 (247 aa).

Positions 1 to 15 (MKALIFLAFLGAAVA) are cleaved as a signal peptide. Positions 16-24 (LPLDDDDDK) are cleaved as a propeptide — activation peptide. Residues 25-245 (IVGGYTCQKN…YVNWIQQTVA (221 aa)) form the Peptidase S1 domain. Intrachain disulfides connect Cys-31–Cys-161, Cys-49–Cys-65, Cys-133–Cys-234, Cys-140–Cys-207, Cys-172–Cys-186, and Cys-197–Cys-221. Catalysis depends on His-64, which acts as the Charge relay system. The Ca(2+) site is built by Glu-76, Asn-78, Val-81, and Glu-86. Residue Asp-108 is the Charge relay system of the active site. Ser-201 functions as the Charge relay system in the catalytic mechanism.

This sequence belongs to the peptidase S1 family. The cofactor is Ca(2+).

It localises to the secreted. The protein resides in the extracellular space. It carries out the reaction Preferential cleavage: Arg-|-Xaa, Lys-|-Xaa.. This chain is Cationic trypsin-3 (Try3), found in Rattus norvegicus (Rat).